The chain runs to 220 residues: Peptidoglycan hydrolase gp5 (220 aa).

This sequence belongs to the peptidase U40 family. As to quaternary structure, monomer.

Its subcellular location is the virion. Functionally, muralytic enzyme exposed to host peptidoglycan layer after membrane fusion during viral entry. Functions as an exolysin that cleaves the peptide bridge formed by meso-diaminopimelic acid and D-alanine. Also lyses the host cell late in infection to release the virions. The sequence is that of Peptidoglycan hydrolase gp5 (P5) from Pseudomonas savastanoi pv. phaseolicola (Pseudomonas syringae pv. phaseolicola).